The primary structure comprises 237 residues: Large ribosomal subunit protein uL1 (237 aa).

It belongs to the universal ribosomal protein uL1 family. As to quaternary structure, part of the 50S ribosomal subunit.

Binds directly to 23S rRNA. The L1 stalk is quite mobile in the ribosome, and is involved in E site tRNA release. In terms of biological role, protein L1 is also a translational repressor protein, it controls the translation of the L11 operon by binding to its mRNA. This Myxococcus xanthus (strain DK1622) protein is Large ribosomal subunit protein uL1.